Reading from the N-terminus, the 587-residue chain is Leucine-rich repeat-containing protein 63 (587 aa).

LRR repeat units lie at residues 251-274 (QSVI…IPPR), 344-367 (AFQL…ILCL), 368-390 (KNLQ…IQQL), 392-413 (FLRI…LFSL), 414-436 (SYLE…IQKL), 437-459 (RSLE…ILKL), and 487-510 (LTQI…IPVE).

The polypeptide is Leucine-rich repeat-containing protein 63 (LRRC63) (Homo sapiens (Human)).